Here is a 461-residue protein sequence, read N- to C-terminus: Porin AaxA (461 aa).

The first 22 residues, 1–22 (MSFRSVLLTALLSLSFTTTMQA), serve as a signal peptide directing secretion.

It belongs to the OprB family.

It localises to the cell outer membrane. In terms of biological role, facilitates L-arginine uptake, as part of the AaxABC system. The arginine uptake by the bacterium in the macrophage may be a virulence factor against the host innate immune response. This is Porin AaxA (aaxA) from Chlamydia trachomatis serovar D (strain ATCC VR-885 / DSM 19411 / UW-3/Cx).